We begin with the raw amino-acid sequence, 160 residues long: Large ribosomal subunit protein uL10 (160 aa).

Belongs to the universal ribosomal protein uL10 family. Part of the ribosomal stalk of the 50S ribosomal subunit. The N-terminus interacts with L11 and the large rRNA to form the base of the stalk. The C-terminus forms an elongated spine to which L12 dimers bind in a sequential fashion forming a multimeric L10(L12)X complex.

In terms of biological role, forms part of the ribosomal stalk, playing a central role in the interaction of the ribosome with GTP-bound translation factors. The sequence is that of Large ribosomal subunit protein uL10 from Wolinella succinogenes (strain ATCC 29543 / DSM 1740 / CCUG 13145 / JCM 31913 / LMG 7466 / NCTC 11488 / FDC 602W) (Vibrio succinogenes).